Consider the following 520-residue polypeptide: Cyclin-L2 (520 aa).

Cyclin-like regions lie at residues 81–183 (ELIQ…RVLK) and 196–280 (KIIV…KILQ). Positions 309–520 (RAKGLLPPGS…DHPGHSRHRR (212 aa)) are disordered. Residues Ser-330, Ser-337, Ser-347, and Ser-350 each carry the phosphoserine modification. Basic and acidic residues predominate over residues 356 to 366 (RKMEGPKKAKG). Ser-368 is modified (phosphoserine). Positions 384-422 (RSREQSYSRSPSRSASPKRRKSDSGSTSGGSKSQSRSRS) are RS. Low complexity predominate over residues 407 to 429 (SGSTSGGSKSQSRSRSRSDSPPR). Basic and acidic residues predominate over residues 440 to 453 (SEVRGSRKSKDCKH). Basic residues predominate over residues 454-471 (LTQKPHKSRSRSSSRSRS). Composition is skewed to basic and acidic residues over residues 472-481 (RSRERTDSSG) and 489-514 (YYRDQRRERSRSYERTGHRYERDHPG).

Belongs to the cyclin family. Cyclin L subfamily. In terms of assembly, interacts with CDK11A, CDK11B, CDK12, CDK13 and POLR2A, the hyperphosphorylated C-terminal domain (CTD) of RNA polymerase II. May form a ternary complex with CDK11B and casein kinase II (CKII). Interacts with pre-mRNA-splicing factors, including at least SRSF1, SRSF2 and SRSF7/SLU7.

The protein localises to the nucleus speckle. The protein resides in the nucleus. Its subcellular location is the nucleoplasm. Its function is as follows. Involved in pre-mRNA splicing. May induce cell death, possibly by acting on the transcription and RNA processing of apoptosis-related factors. The polypeptide is Cyclin-L2 (Ccnl2) (Rattus norvegicus (Rat)).